The chain runs to 447 residues: GTPase Der (447 aa).

2 consecutive EngA-type G domains span residues 4–165 (QIIA…PKEK) and 180–357 (VQIV…KNWN). GTP-binding positions include 10-17 (GRPNVGKS), 57-61 (DTPGL), 119-122 (NKCE), 186-193 (GRPNAGKS), 233-237 (DTAGL), and 298-301 (NKWD). The 86-residue stretch at 358-443 (KKITTSKLNE…PIRFAYVKTK (86 aa)) folds into the KH-like domain.

It belongs to the TRAFAC class TrmE-Era-EngA-EngB-Septin-like GTPase superfamily. EngA (Der) GTPase family. As to quaternary structure, associates with the 50S ribosomal subunit.

Its function is as follows. GTPase that plays an essential role in the late steps of ribosome biogenesis. The sequence is that of GTPase Der from Rickettsia canadensis (strain McKiel).